We begin with the raw amino-acid sequence, 538 residues long: Probable cytochrome P450 309a2 (538 aa).

Cysteine 483 serves as a coordination point for heme.

This sequence belongs to the cytochrome P450 family. It depends on heme as a cofactor.

The protein resides in the endoplasmic reticulum membrane. It localises to the microsome membrane. In terms of biological role, may be involved in the metabolism of insect hormones and in the breakdown of synthetic insecticides. The protein is Probable cytochrome P450 309a2 (Cyp309a2) of Drosophila melanogaster (Fruit fly).